The primary structure comprises 518 residues: Putative N-acetylmuramoyl-L-alanine amidase YrvJ (518 aa).

Positions 1–27 (MNKKYFVLIVCIIFTSALFPTFSSVTA) are cleaved as a signal peptide. SH3b domains lie at 29 to 91 (QGEA…ITKE), 102 to 164 (SDTV…TSGG), 181 to 243 (STTG…LTSS), and 258 to 320 (AKKA…VQTS). Disordered stretches follow at residues 94-121 (ASTS…PGTS) and 160-186 (VTSG…TGTV). 2 stretches are compositionally biased toward low complexity: residues 95–108 (STSS…VTST) and 160–169 (VTSGGSSSAS). The tract at residues 322-352 (SAEEAGEPPVSDSPSGNGSLNNKTIIVDPGH) is disordered. Positions 333-345 (DSPSGNGSLNNKT) are enriched in polar residues. One can recognise a MurNAc-LAA domain in the interval 346–514 (IIVDPGHGGK…VTDGIESGLE (169 aa)).

The protein belongs to the N-acetylmuramoyl-L-alanine amidase 3 family.

It localises to the secreted. The protein resides in the cell wall. The enzyme catalyses Hydrolyzes the link between N-acetylmuramoyl residues and L-amino acid residues in certain cell-wall glycopeptides.. In terms of biological role, probably involved in cell-wall metabolism. This is Putative N-acetylmuramoyl-L-alanine amidase YrvJ (yrvJ) from Bacillus subtilis (strain 168).